The chain runs to 124 residues: Large ribosomal subunit protein bL12c (124 aa).

The protein belongs to the bacterial ribosomal protein bL12 family. As to quaternary structure, homodimer. Part of the ribosomal stalk of the 50S ribosomal subunit. Forms a multimeric L10(L12)X complex, where L10 forms an elongated spine to which 2 to 4 L12 dimers bind in a sequential fashion. Binds GTP-bound translation factors.

Its subcellular location is the plastid. It localises to the chloroplast. Its function is as follows. Forms part of the ribosomal stalk which helps the ribosome interact with GTP-bound translation factors. Is thus essential for accurate translation. In Cyanidioschyzon merolae (strain NIES-3377 / 10D) (Unicellular red alga), this protein is Large ribosomal subunit protein bL12c.